The following is a 223-amino-acid chain: PKHD-type hydroxylase CPS_3426 (223 aa).

Residues 77–175 (KSMMPFIISE…RKVALTWIES (99 aa)) enclose the Fe2OG dioxygenase domain. Positions 96, 98, and 156 each coordinate Fe cation. Arg-166 provides a ligand contact to 2-oxoglutarate.

Fe(2+) serves as cofactor. L-ascorbate is required as a cofactor.

This chain is PKHD-type hydroxylase CPS_3426, found in Colwellia psychrerythraea (strain 34H / ATCC BAA-681) (Vibrio psychroerythus).